Consider the following 167-residue polypeptide: Insertion element IS1 protein InsB (167 aa).

This sequence belongs to the transposase 27 family.

Functionally, absolutely required for transposition of IS1. This Escherichia coli protein is Insertion element IS1 protein InsB (insB).